We begin with the raw amino-acid sequence, 141 residues long: Large ribosomal subunit protein bL21 (141 aa).

The tract at residues 111–141 (ATAPSRTEAAPESNPEAAPSAAATGIPADEE) is disordered. The span at 118–133 (EAAPESNPEAAPSAAA) shows a compositional bias: low complexity.

Belongs to the bacterial ribosomal protein bL21 family. As to quaternary structure, part of the 50S ribosomal subunit. Contacts protein L20.

In terms of biological role, this protein binds to 23S rRNA in the presence of protein L20. This chain is Large ribosomal subunit protein bL21, found in Synechococcus sp. (strain JA-2-3B'a(2-13)) (Cyanobacteria bacterium Yellowstone B-Prime).